The chain runs to 314 residues: Deacetoxycephalosporin C synthase (314 aa).

The region spanning 156 to 269 (DCEPLLRLRY…RTSSVFFLRP (114 aa)) is the Fe2OG dioxygenase domain.

Belongs to the iron/ascorbate-dependent oxidoreductase family. Requires Fe cation as cofactor. It depends on L-ascorbate as a cofactor.

It catalyses the reaction penicillin N + 2-oxoglutarate + O2 = deacetoxycephalosporin C + succinate + CO2 + H2O. The protein operates within antibiotic biosynthesis; cephalosporin C biosynthesis. Catalyzes the step from penicillin N to deacetoxy-cephalosporin C. The polypeptide is Deacetoxycephalosporin C synthase (cefE) (Amycolatopsis lactamdurans (Nocardia lactamdurans)).